Consider the following 377-residue polypeptide: Terpene synthase 1 (377 aa).

Residues 81–86 (DDALDA) carry the DDxx(x)D/E motif motif. An NDxxSxxxD/E motif motif is present at residues 221-229 (NDLVSYEKE). Residues 326–359 (RKQSSSPNLTNSISIPTNNTNNSNNITSSPNKKQ) are disordered. A compositionally biased stretch (low complexity) spans 335–356 (TNSISIPTNNTNNSNNITSSPN).

This sequence belongs to the terpene synthase family.

It carries out the reaction (2E,6E)-farnesyl diphosphate = (2S,3R,6S,9S)-(-)-protoillud-7-ene + diphosphate. Functionally, terpene synthase that converts its substrate farnesyl diphosphate (FPP) into the sesquiterpene protoillud-7-ene. In Dictyostelium purpureum (Slime mold), this protein is Terpene synthase 1.